Consider the following 906-residue polypeptide: Patched domain-containing protein 3 (906 aa).

The disordered stretch occupies residues 1-70 (MISSKVAPGE…LGQEAPPPRR (70 aa)). 2 N-linked (GlcNAc...) asparagine glycosylation sites follow: N148 and N235. 11 helical membrane-spanning segments follow: residues 338–358 (TVIP…VVSC), 370–390 (VAVF…GLML), 392–412 (LGVP…GVGV), 442–462 (VAVS…TGIT), 476–496 (GTTL…VMAL), 559–579 (FIVV…CFQV), 760–780 (VMIA…HPVC), 782–802 (LWVT…MAFW), 814–834 (LVIC…AFVS), 848–868 (LYLL…GVCV), and 883–903 (IMFL…PVFL). In terms of domain architecture, SSD spans 339–496 (VIPLFHLAYI…ITCFGAVMAL (158 aa)).

The protein belongs to the patched family. As to expression, expressed in germ cells of the testis (at protein level).

It is found in the cell projection. The protein localises to the cilium. Its subcellular location is the flagellum membrane. The protein resides in the endoplasmic reticulum membrane. In terms of biological role, may play a role in sperm development or sperm function. However, does not appear to have an essential role in spermatogenesis or male fertility. In Mus musculus (Mouse), this protein is Patched domain-containing protein 3 (Ptchd3).